The primary structure comprises 279 residues: MGIRKYKPTTPGRRGSSVADFTEITRSTPEKSLVRPLPKKGGRNNTGKITTRHKGGGHKRQYRLIDFRRHDKDGVDARVAEIEYDPNRTARIALLHYVDGTKRYIIAPNKLSQGDFVEAGANADIKPGNNLPLRNIPVGTVIHAVELRPGGGAKMGRSAGASIQLVAKEGRFAQLRLPSGEIRNVDVRCRATVGEVGNAEQSNINWGKAGRMRWKGVRPTVRGVAMNPVDHPHGGGEGKTSGGRHPVNPNGKREGRTRRPNKESDKLIVRRRRTGKNKR.

2 disordered regions span residues 1–59 and 224–279; these read MGIR…GGHK and VAMN…KNKR. Basic residues-rich tracts occupy residues 50 to 59 and 269 to 279; these read TTRHKGGGHK and VRRRRTGKNKR.

Belongs to the universal ribosomal protein uL2 family. As to quaternary structure, part of the 50S ribosomal subunit. Forms a bridge to the 30S subunit in the 70S ribosome.

One of the primary rRNA binding proteins. Required for association of the 30S and 50S subunits to form the 70S ribosome, for tRNA binding and peptide bond formation. It has been suggested to have peptidyltransferase activity; this is somewhat controversial. Makes several contacts with the 16S rRNA in the 70S ribosome. The protein is Large ribosomal subunit protein uL2 of Arthrobacter sp. (strain FB24).